The primary structure comprises 166 residues: Mitochondrial fission process protein 1 (166 aa).

The next 3 membrane-spanning stretches (helical) occupy residues 33-53, 78-98, and 125-145; these read SLVK…YVAA, AIAA…IPGF, and TVTC…DSFV.

Belongs to the MTFP1 family.

It localises to the mitochondrion inner membrane. In terms of biological role, involved in the mitochondrial division probably by regulating membrane fission. Loss-of-function leads to apoptosis. This is Mitochondrial fission process protein 1 (mtp-18) from Caenorhabditis elegans.